A 1914-amino-acid chain; its full sequence is Zinc finger protein Rlf (1914 aa).

Position 41 is a phosphoserine (Ser-41). The segment covering 521–540 has biased composition (basic and acidic residues); that stretch reads KQYRRRDLTDQHKEKRDKKP. Residues 521–541 form a disordered region; the sequence is KQYRRRDLTDQHKEKRDKKPI. Residues 582-604 form a C2H2-type 1 zinc finger; the sequence is YTCPVCIKKFKRKEMFVPHVMEH. Residue Lys-622 forms a Glycyl lysine isopeptide (Lys-Gly) (interchain with G-Cter in SUMO2) linkage. Phosphoserine occurs at positions 632 and 634. C2H2-type zinc fingers lie at residues 671-696, 714-736, 742-766, 771-795, and 801-825; these read YPCP…KAEH, EKCT…EQVH, YMCV…KQKH, YKCE…EAQH, and YTCN…LSMH. Residue Lys-839 forms a Glycyl lysine isopeptide (Lys-Gly) (interchain with G-Cter in SUMO2) linkage. A disordered region spans residues 882–907; that stretch reads TETAENLKENSDSNSSDQLSHSSSAS. The segment covering 893 to 907 has biased composition (low complexity); sequence DSNSSDQLSHSSSAS. The C2H2-type 7 zinc finger occupies 954–979; that stretch reads FTCGFDGCGSTYKNARGMQKHLRKVH. Positions 993–1028 are disordered; that stretch reads LFPSLGNEHNQTTEKLDAEPKPCSDTNSDSPDEGLD. The segment covering 1003-1014 has biased composition (basic and acidic residues); that stretch reads QTTEKLDAEPKP. 2 consecutive C2H2-type zinc fingers follow at residues 1127–1152 and 1172–1195; these read FFCE…LKKH and FQCH…KNKH. Residues 1231–1290 form a disordered region; it reads LGGDPSSNSEKPHCHPKKDECSSETDLESSCEETESKTSDISSPIGSHREEQEGREGRGS. A compositionally biased stretch (basic and acidic residues) spans 1240 to 1251; the sequence is EKPHCHPKKDEC. Acidic residues predominate over residues 1252–1263; sequence SSETDLESSCEE. Residues 1277–1289 are compositionally biased toward basic and acidic residues; sequence SHREEQEGREGRG. 5 C2H2-type zinc fingers span residues 1310–1335, 1362–1387, 1407–1432, 1444–1469, and 1549–1574; these read FHCI…RTVH, FACK…SDSH, FSCN…MEQH, IHCD…YYRH, and YPCM…KRTH. Lys-1423 is covalently cross-linked (Glycyl lysine isopeptide (Lys-Gly) (interchain with G-Cter in SUMO2)). Glycyl lysine isopeptide (Lys-Gly) (interchain with G-Cter in SUMO2) cross-links involve residues Lys-1599 and Lys-1611. Positions 1620 to 1654 are disordered; sequence SERTEHSHSPGDSSAPIQNTDCCHSSERDGGQKGC. Polar residues predominate over residues 1629-1642; sequence PGDSSAPIQNTDCC. Lys-1696 participates in a covalent cross-link: Glycyl lysine isopeptide (Lys-Gly) (interchain with G-Cter in SUMO2). A disordered region spans residues 1725 to 1757; that stretch reads ESETRQHSSGQENTVKNPTHVPKENFRKHSQPR. The segment covering 1731 to 1741 has biased composition (polar residues); the sequence is HSSGQENTVKN. Residue Lys-1762 forms a Glycyl lysine isopeptide (Lys-Gly) (interchain with G-Cter in SUMO2) linkage. A disordered region spans residues 1783 to 1807; that stretch reads KEDDFDDWEPSEHLTLSNSSQSSND. The span at 1796–1807 shows a compositional bias: polar residues; that stretch reads LTLSNSSQSSND.

Belongs to the krueppel C2H2-type zinc-finger protein family. Interacts with RIT1 and RIT2. As to expression, widely expressed in fetal and adult tissues.

It is found in the nucleus. Its function is as follows. May be involved in transcriptional regulation. This Homo sapiens (Human) protein is Zinc finger protein Rlf (RLF).